The following is a 136-amino-acid chain: MDSAVELSDPFDYIDHYFGYPVIGTEYSYEKLVNPSMLCEDKYFNLVGMMNYIIKNKTSDDDEKPGNSKIKSHTDQPPTTQTLSKSNYNVIFKIVIFIIIKCKRIKKKNRVNNPKIKTNNPNEEFENTGADSVVTQ.

Disordered stretches follow at residues 58–82 (TSDD…TTQT) and 112–136 (NNPK…VVTQ).

This is an uncharacterized protein from Dictyostelium discoideum (Social amoeba).